A 201-amino-acid polypeptide reads, in one-letter code: Peptide deformylase (201 aa).

A compositionally biased stretch (polar residues) spans 1-17 (MANNFSQLARKSKTNSP). The tract at residues 1-24 (MANNFSQLARKSKTNSPIEKVSKE) is disordered. Cysteine 121 and histidine 163 together coordinate Fe cation. Glutamate 164 is a catalytic residue. A Fe cation-binding site is contributed by histidine 167.

The protein belongs to the polypeptide deformylase family. The cofactor is Fe(2+).

The enzyme catalyses N-terminal N-formyl-L-methionyl-[peptide] + H2O = N-terminal L-methionyl-[peptide] + formate. Removes the formyl group from the N-terminal Met of newly synthesized proteins. Requires at least a dipeptide for an efficient rate of reaction. N-terminal L-methionine is a prerequisite for activity but the enzyme has broad specificity at other positions. This chain is Peptide deformylase, found in Prochlorococcus marinus subsp. pastoris (strain CCMP1986 / NIES-2087 / MED4).